Here is a 651-residue protein sequence, read N- to C-terminus: Beta-glucuronidase (651 aa).

The first 22 residues, 1-22 (MARGSAVAWAALGPLLWGCALG), serve as a signal peptide directing secretion. N-linked (GlcNAc...) asparagine glycosylation is found at N173, N272, and N420. E451 serves as the catalytic Proton donor. Residue N631 is glycosylated (N-linked (GlcNAc...) asparagine).

It belongs to the glycosyl hydrolase 2 family. Homotetramer. In terms of processing, N-linked glycosylated with 3 to 4 oligosaccharide chains.

It localises to the lysosome. The catalysed reaction is a beta-D-glucuronoside + H2O = D-glucuronate + an alcohol. Inhibited by L-aspartic acid. Functionally, plays an important role in the degradation of dermatan and keratan sulfates. In Homo sapiens (Human), this protein is Beta-glucuronidase (GUSB).